Here is a 100-residue protein sequence, read N- to C-terminus: Urease subunit gamma (100 aa).

It belongs to the urease gamma subunit family. In terms of assembly, heterotrimer of UreA (gamma), UreB (beta) and UreC (alpha) subunits. Three heterotrimers associate to form the active enzyme.

It localises to the cytoplasm. The enzyme catalyses urea + 2 H2O + H(+) = hydrogencarbonate + 2 NH4(+). The protein operates within nitrogen metabolism; urea degradation; CO(2) and NH(3) from urea (urease route): step 1/1. This is Urease subunit gamma from Burkholderia mallei (strain NCTC 10247).